A 696-amino-acid polypeptide reads, in one-letter code: Polyribonucleotide nucleotidyltransferase (696 aa).

Mg(2+)-binding residues include Asp483 and Asp489. The KH domain maps to 550 to 609 (PRITTIYVKTDKIRDVIGSGGKNIRGITEATGVTIDIDDTGKINIASTDKAACDLAIKMI). An S1 motif domain is found at 619 to 687 (GKLYMGLVKK…KQGKIKLSRK (69 aa)).

It belongs to the polyribonucleotide nucleotidyltransferase family. The cofactor is Mg(2+).

It is found in the cytoplasm. It catalyses the reaction RNA(n+1) + phosphate = RNA(n) + a ribonucleoside 5'-diphosphate. In terms of biological role, involved in mRNA degradation. Catalyzes the phosphorolysis of single-stranded polyribonucleotides processively in the 3'- to 5'-direction. This is Polyribonucleotide nucleotidyltransferase from Geotalea uraniireducens (strain Rf4) (Geobacter uraniireducens).